The following is a 916-amino-acid chain: Nonsense-mediated mRNA decay factor SMG8 (916 aa).

The tract at residues 566-626 is disordered; the sequence is LENSNRTPDT…KNYASQGDAD (61 aa). The span at 589-604 shows a compositional bias: polar residues; it reads LSGSQKSQDSASNLTF.

This sequence belongs to the SMG8 family.

Its function is as follows. Involved in nonsense-mediated decay (NMD) of mRNAs containing premature stop codons. Probable component of kinase complex containing SMG1 and recruited to stalled ribosomes. The protein is Nonsense-mediated mRNA decay factor SMG8 of Aedes aegypti (Yellowfever mosquito).